A 128-amino-acid polypeptide reads, in one-letter code: Large ribosomal subunit protein bL17 (128 aa).

This sequence belongs to the bacterial ribosomal protein bL17 family. Part of the 50S ribosomal subunit. Contacts protein L32.

The polypeptide is Large ribosomal subunit protein bL17 (Haemophilus influenzae (strain 86-028NP)).